Reading from the N-terminus, the 539-residue chain is Tripartite motif-containing protein 26 (539 aa).

An RING-type zinc finger spans residues 16-57 (CSICLDYLRDPVTIDCGHVFCRSCTTDVRPISGSRPVCPLCK). The segment at 97 to 138 (QDAKLCERHREKLHYYCEDDGKLLCVMCRESREHRPHTAVLM) adopts a B box-type zinc-finger fold. Residues C102, H105, C124, and H130 each coordinate Zn(2+). The stretch at 188–227 (IVAEFEQGHQFLREREEHLLEQLAKLEQELTEGREKFKSR) forms a coiled coil. One can recognise a B30.2/SPRY domain in the interval 295 to 539 (RGLREFQGKL…WPGTRLLLRP (245 aa)). Residues 376-437 (REGWSEDEEE…EEEEEVLESC (62 aa)) form a disordered region. Positions 380 to 434 (SEDEEEGDEEEEGEEEEEEEEAGYGDGYDDWETDEDEESLGDEEEEEEEEEEEVL) are enriched in acidic residues.

It belongs to the TRIM/RBCC family. In terms of assembly, interacts with TBK1; this interaction bridges together TBK1 and NEMO in order to activate TBK1. Interacts with INCA1. In terms of processing, autoubiquitinates upon viral infection. In turn, autoubiquitinated TRIM26 recruits NEMO and bridges TBK1-NEMO interaction.

The protein localises to the cytoplasm. It localises to the nucleus. The catalysed reaction is S-ubiquitinyl-[E2 ubiquitin-conjugating enzyme]-L-cysteine + [acceptor protein]-L-lysine = [E2 ubiquitin-conjugating enzyme]-L-cysteine + N(6)-ubiquitinyl-[acceptor protein]-L-lysine.. E3 ubiquitin-protein ligase which regulates the IFN-beta production and antiviral response downstream of various DNA-encoded pattern-recognition receptors (PRRs). Also plays a central role in determining the response to different forms of oxidative stress by controlling levels of DNA glycosylases NEIL1, NEIL3 and NTH1 that are involved in repair of damaged DNA. Promotes nuclear IRF3 ubiquitination and proteasomal degradation. Bridges together TBK1 and NEMO during the innate response to viral infection leading to the activation of TBK1. Positively regulates LPS-mediated inflammatory innate immune response by catalyzing the 'Lys-11'-linked polyubiquitination of TAB1 to enhance its activation and subsequent NF-kappa-B and MAPK signaling. In a manner independent of its catalytic activity, inhibits WWP2, a SOX2-directed E3 ubiquitin ligase, and thus protects SOX2 from polyubiquitination and proteasomal degradation. Ubiquitinates the histone acetyltransferase protein complex component PHF20 and thereby triggers its degradation in the nucleus after its recruitment by the histone demethylase KDM6B, serving as a scaffold protein. Upon induction by TGF-beta, ubiquitinates the TFIID component TAF7 for proteasomal degradation. Induces ferroptosis by ubiquitinating SLC7A11, a critical protein for lipid reactive oxygen species (ROS) scavenging. Inhibits directly hepatitis B virus replication by mediating HBX ubiquitination and subsequent degradation. Functionally, (Microbial infection) Promotes herpes simplex virus type 2/HHV-2 infection in vaginal epithelial cells by decreasing the nuclear localization of IRF3, the primary mediator of type I interferon activation. The chain is Tripartite motif-containing protein 26 (TRIM26) from Homo sapiens (Human).